Reading from the N-terminus, the 273-residue chain is Eukaryotic translation initiation factor 3 subunit J (273 aa).

The interval Met-1–Glu-158 is disordered. Residues Asp-34 to Val-54 are compositionally biased toward acidic residues. Residues Glu-50 to Ser-97 adopt a coiled-coil conformation. Residues Glu-55–Ala-75 are compositionally biased toward basic and acidic residues. Residues Glu-95–Thr-104 show a composition bias toward acidic residues. Over residues Glu-105–Asp-126 the composition is skewed to basic and acidic residues.

This sequence belongs to the eIF-3 subunit J family. As to quaternary structure, component of the eukaryotic translation initiation factor 3 (eIF-3) complex.

It localises to the cytoplasm. Component of the eukaryotic translation initiation factor 3 (eIF-3) complex, which is involved in protein synthesis of a specialized repertoire of mRNAs and, together with other initiation factors, stimulates binding of mRNA and methionyl-tRNAi to the 40S ribosome. The eIF-3 complex specifically targets and initiates translation of a subset of mRNAs involved in cell proliferation. The sequence is that of Eukaryotic translation initiation factor 3 subunit J from Pyricularia oryzae (strain 70-15 / ATCC MYA-4617 / FGSC 8958) (Rice blast fungus).